We begin with the raw amino-acid sequence, 270 residues long: Maximins-S type D (270 aa).

An N-terminal signal peptide occupies residues 1 to 18 (MNFNYFILVLFFITSGHA). 2 propeptides span residues 19–35 (KSET…HIKR) and 52–65 (SAEE…LVTR). Asn83 bears the Asparagine amide mark. Residues 87–100 (SAEEQDLAEDLVTR) constitute a propeptide that is removed on maturation. Residue Lys118 is modified to Lysine amide. Residues 122–135 (SAEDQDLAEDLVTR) constitute a propeptide that is removed on maturation. Position 153 is an asparagine amide (Asn153). Positions 157 to 170 (SAEEQDLAEHLVTR) are excised as a propeptide. At Asn188 the chain carries Asparagine amide. Residues 192-205 (SAEEQDLVEDLVTR) constitute a propeptide that is removed on maturation. Lys223 is subject to Lysine amide. Residues 227–240 (SAEEQDLAEDLVTR) constitute a propeptide that is removed on maturation. Lys258 is modified (lysine amide). Positions 262–270 (SAEQEKDMK) are excised as a propeptide.

This sequence belongs to the maximin-S family. In terms of tissue distribution, expressed by the skin dorsal glands.

Its subcellular location is the secreted. Functionally, maximin-S1 has no antimicrobial activity. Has no hemolytic activity. In terms of biological role, maximin-S2 has an activity against mycoplasma but has no activity against common Gram-positive and Gram-negative bacteria nor fungi. Has no hemolytic activity. Its function is as follows. Maximin-S3 has an activity against mycoplasma but has no activity against common Gram-positive and Gram-negative bacteria nor fungi. Has no hemolytic activity. Maximin-S4 has an activity against mycoplasma but has no activity against common Gram-positive and Gram-negative bacteria nor fungi. Has no hemolytic activity. Functionally, maximin-S5 has an activity against mycoplasma but has no activity against common Gram-positive and Gram-negative bacteria nor fungi. Has no hemolytic activity. The protein is Maximins-S type D of Bombina maxima (Giant fire-bellied toad).